Reading from the N-terminus, the 280-residue chain is F420-dependent methylenetetrahydromethanopterin dehydrogenase (280 aa).

This sequence belongs to the MTD family.

The enzyme catalyses 5,10-methylenetetrahydromethanopterin + oxidized coenzyme F420-(gamma-L-Glu)(n) + 2 H(+) = 5,10-methenyl-5,6,7,8-tetrahydromethanopterin + reduced coenzyme F420-(gamma-L-Glu)(n). It functions in the pathway one-carbon metabolism; methanogenesis from CO(2); 5,10-methylene-5,6,7,8-tetrahydromethanopterin from 5,10-methenyl-5,6,7,8-tetrahydromethanopterin (coenzyme F420 route): step 1/1. Functionally, catalyzes the reversible reduction of methenyl-H(4)MPT(+) to methylene-H(4)MPT. This chain is F420-dependent methylenetetrahydromethanopterin dehydrogenase, found in Methanospirillum hungatei JF-1 (strain ATCC 27890 / DSM 864 / NBRC 100397 / JF-1).